Consider the following 176-residue polypeptide: ATP synthase subunit b (176 aa).

A helical transmembrane segment spans residues Phe24–Gly43.

Belongs to the ATPase B chain family. In terms of assembly, F-type ATPases have 2 components, F(1) - the catalytic core - and F(0) - the membrane proton channel. F(1) has five subunits: alpha(3), beta(3), gamma(1), delta(1), epsilon(1). F(0) has three main subunits: a(1), b(2) and c(10-14). The alpha and beta chains form an alternating ring which encloses part of the gamma chain. F(1) is attached to F(0) by a central stalk formed by the gamma and epsilon chains, while a peripheral stalk is formed by the delta and b chains.

The protein resides in the cell inner membrane. F(1)F(0) ATP synthase produces ATP from ADP in the presence of a proton or sodium gradient. F-type ATPases consist of two structural domains, F(1) containing the extramembraneous catalytic core and F(0) containing the membrane proton channel, linked together by a central stalk and a peripheral stalk. During catalysis, ATP synthesis in the catalytic domain of F(1) is coupled via a rotary mechanism of the central stalk subunits to proton translocation. Its function is as follows. Component of the F(0) channel, it forms part of the peripheral stalk, linking F(1) to F(0). In Nitratidesulfovibrio vulgaris (strain ATCC 29579 / DSM 644 / CCUG 34227 / NCIMB 8303 / VKM B-1760 / Hildenborough) (Desulfovibrio vulgaris), this protein is ATP synthase subunit b.